The following is an 881-amino-acid chain: MSELLLRLNFLLLLLLSCVSPSSFVTFNNPVVGLGACGPHQIQAFTQFKNEFNTRACNHSSPWNGVWCDNSTGAVTKIQFMACLSGTLKSNSSLFQFHELRSLLLIHNNFTSSSISSKFGMLNKLEVLFLSSSGFLGQVPFSFSNLSMLSALDLSDNELTGSLSFVRNLRKLRVLDVSYNHFSGILNPNSSLFELHHLTYLSLGSNSFTSSTLPYEFGNLNKLELLDVSSNSFFGQVPPTISNLTQLTELYLPLNDFTGSLPLVQNLTKLSILALFGNHFSGTIPSSLFTMPFLSYLSLKGNNLNGSIEVPNSSSSSRLESLYLGKNHFEGKILKPISKLINLKELDLSFLSTSYPIDLSLFSSFKSLLVLDLTGDWISQAGLSSDSYISLTLEALYMKQCNISDFPNILKSLPNLECIDVSNNRVSGKIPEWLWSLPRLSSVFIGDNLLTGFEGSSEILVNSSVQILVLDSNSLEGALPHLPLSIIYFSARYNRFKGDIPLSICNRSSLDVLDLRYNNFTGPIPPCLSNLLFLNLRKNNLEGSIPDTYFADAPLRSLDVGYNRLTGKLPRSLLNCSALQFLSVDHNGIEDTFPFYLKVLPKLQVLLLSSNKFYGPLSPPNQGSLGFPELRILEIAGNKLTGSLPQDFFVNWKASSLTMNEDQGLYMVYSKVVYGIYYLSYLATIDLQYKGLSMEQKWVLTSSATIDLSGNRLEGEIPESIGLLKALIALNLSNNAFTGHIPLSLANLVKIESLDLSSNQLSGTIPNGLGTLSFLAYVNVSHNQLNGEIPQGTQITGQPKSSFEGNAGLCGLPLQQRCFGTNAPPAHQFKEEEDEEQEQVLNWEGVAIGYGVGVLLGLAIAQLIASYKPEWLACLIKSRNR.

The N-terminal stretch at 1-21 (MSELLLRLNFLLLLLLSCVSP) is a signal peptide. The Extracellular segment spans residues 22–844 (SSFVTFNNPV…EEQEQVLNWE (823 aa)). N58, N70, N91, N109, and N145 each carry an N-linked (GlcNAc...) asparagine glycan. LRR repeat units follow at residues 97 to 121 (FHEL…KFGM), 122 to 145 (LNKL…SFSN), 146 to 169 (LSML…VRNL), 170 to 195 (RKLR…LFEL), 197 to 219 (HLTY…EFGN), 220 to 244 (LNKL…ISNL), 245 to 267 (TQLT…VQNL), 268 to 291 (TKLS…LFTM), 293 to 317 (FLSY…SSSS), 319 to 340 (LESL…ISKL), 342 to 364 (NLKE…LFSS), 365 to 390 (FKSL…SYIS), 391 to 412 (LTLE…ILKS), 413 to 437 (LPNL…LWSL), 439 to 462 (RLSS…ILVN), and 463 to 486 (SSVQ…PLSI). N189 is a glycosylation site (N-linked (GlcNAc...) asparagine). Residues N243 and N266 are each glycosylated (N-linked (GlcNAc...) asparagine). 2 N-linked (GlcNAc...) asparagine glycosylation sites follow: N305 and N312. N402 is a glycosylation site (N-linked (GlcNAc...) asparagine). The N-linked (GlcNAc...) asparagine glycan is linked to N462. The LRR 17; degenerate repeat unit spans residues 487-506 (IYFSARYNRFKGDIPLSICN). N-linked (GlcNAc...) asparagine glycosylation is found at N506 and N519. 10 LRR repeats span residues 507–528 (RSSL…PPCL), 529–552 (SNLL…YFAD), 554–576 (PLRS…LLNC), 578–599 (ALQF…YLKV), 600–624 (LPKL…NQGS), 627–651 (FPEL…FFVN), 701–724 (TSSA…IGLL), 725–748 (KALI…LANL), 749–772 (VKIE…LGTL), and 774–797 (FLAY…QITG). N-linked (GlcNAc...) asparagine glycosylation is present at N575. Residue N731 is glycosylated (N-linked (GlcNAc...) asparagine). Residue N779 is glycosylated (N-linked (GlcNAc...) asparagine). Residues 845-865 (GVAIGYGVGVLLGLAIAQLIA) traverse the membrane as a helical segment. Topologically, residues 866–881 (SYKPEWLACLIKSRNR) are cytoplasmic.

It belongs to the RLP family.

The protein resides in the cell membrane. Functionally, may be involved in ABA-induced senescence responses. This chain is Receptor-like protein 41, found in Arabidopsis thaliana (Mouse-ear cress).